The sequence spans 396 residues: Unsaturated chondroitin disaccharide hydrolase (396 aa).

The active-site Nucleophile is aspartate 113. Positions 113, 173, 231, 233, 245, 249, 363, and 366 each coordinate substrate. Aspartate 173 (proton donor) is an active-site residue.

This sequence belongs to the glycosyl hydrolase 88 family. As to quaternary structure, monomer.

The enzyme catalyses beta-D-4-deoxy-Delta(4)-GlcpA-(1-&gt;3)-beta-D-GalpNAc6S + H2O = N-acetyl-beta-D-galactosamine 6-sulfate + 5-dehydro-4-deoxy-D-glucuronate. Catalyzes the hydrolysis of unsaturated hyaluronate and chondroitin disaccharides. Also degrades unsaturated heparin disaccharides. Releases 4-deoxy-4,5-didehydro D-glucuronic acid or 4-deoxy-4,5-didehydro L-iduronic acid from chondroitin disaccharides, hyaluronan disaccharides and heparin disaccharides and cleaves both glycosidic (1-&gt;3) and (1-&gt;4) bonds. Prefers sulfated glycosaminoglycans compared to unsulfated glycosaminoglycans. Probably required for mammalian cells invasion through the degradation of extracellular sulfated glycosaminoglycans such as chondroitin and hyaluronan. The polypeptide is Unsaturated chondroitin disaccharide hydrolase (ugl) (Streptococcus pneumoniae (strain ATCC BAA-255 / R6)).